Reading from the N-terminus, the 143-residue chain is Nucleoside diphosphate kinase (143 aa).

The ATP site is built by Lys11, Phe59, Arg87, Thr93, Arg104, and Asn114. His117 serves as the catalytic Pros-phosphohistidine intermediate.

This sequence belongs to the NDK family. In terms of assembly, homotetramer. It depends on Mg(2+) as a cofactor.

The protein resides in the cytoplasm. The enzyme catalyses a 2'-deoxyribonucleoside 5'-diphosphate + ATP = a 2'-deoxyribonucleoside 5'-triphosphate + ADP. The catalysed reaction is a ribonucleoside 5'-diphosphate + ATP = a ribonucleoside 5'-triphosphate + ADP. In terms of biological role, major role in the synthesis of nucleoside triphosphates other than ATP. The ATP gamma phosphate is transferred to the NDP beta phosphate via a ping-pong mechanism, using a phosphorylated active-site intermediate. This Pseudoalteromonas atlantica (strain T6c / ATCC BAA-1087) protein is Nucleoside diphosphate kinase.